The chain runs to 228 residues: Response regulator MprA (228 aa).

Residues 2-116 (RILVVDDDRA…ELLARMRALL (115 aa)) form the Response regulatory domain. D46 is subject to 4-aspartylphosphate. Positions 127–225 (SVAMTFSDLT…VRGVGYVLRE (99 aa)) form a DNA-binding region, ompR/PhoB-type.

In terms of processing, phosphorylated and dephosphorylated by MprB.

It localises to the cytoplasm. Its function is as follows. Member of the two-component regulatory system MprB/MprA which contributes to maintaining a balance among several systems involved in stress resistance and is required for establishment and maintenance of persistent infection in the host. Functions as a transcriptional regulator that recognizes a 19-bp nucleotide motif comprizing two loosely conserved 8-bp direct DNA-binding motif repeats separated by a 3-bp spacer region. The polypeptide is Response regulator MprA (mprA) (Mycobacterium avium (strain 104)).